The chain runs to 314 residues: MPLLVRFLGTAASRPTVERGVSAISLTREGETLLFDCGEGTQRQMMRYGVSFALSDVFFTHVHSDHLLGITGLLRTMALQGRTEPLRLWTPRSTAKTLRQCINIGGERTTFPVEICELEAGSSVKRGEDYRIDTFAVDHRGTASLGYAIVEEERRGRFNPDLARELGIPEGPLWGRIHRGEPIMLDDGRVIESSVLVGERRRGRRIVITGDTRPCDGTLAAAQDADLLIHESTFADEEGARAQETGHSTAREAAEIALKAGVRRLVLTHISARYSRDTRDLEQEARSVFPNTLIARDGTEIELALTEELADTPS.

7 residues coordinate Zn(2+): histidine 61, histidine 63, aspartate 65, histidine 66, histidine 139, aspartate 211, and histidine 269. The active-site Proton acceptor is aspartate 65.

The protein belongs to the RNase Z family. Homodimer. Zn(2+) is required as a cofactor.

The catalysed reaction is Endonucleolytic cleavage of RNA, removing extra 3' nucleotides from tRNA precursor, generating 3' termini of tRNAs. A 3'-hydroxy group is left at the tRNA terminus and a 5'-phosphoryl group is left at the trailer molecule.. Its function is as follows. Zinc phosphodiesterase, which displays some tRNA 3'-processing endonuclease activity. Probably involved in tRNA maturation, by removing a 3'-trailer from precursor tRNA. This chain is Ribonuclease Z, found in Gemmatimonas aurantiaca (strain DSM 14586 / JCM 11422 / NBRC 100505 / T-27).